The sequence spans 229 residues: Matrix protein (229 aa).

The dynamin binding signature appears at 2–4; that stretch reads KSI. The tract at residues 11–36 is disordered; sequence AKKEKKREKKSNHGSHSMEWESPPSY. A compositionally biased stretch (basic residues) spans 13-23; it reads KEKKREKKSNH. The PPXY motif signature appears at 33–36; the sequence is PPSY. The PTAP/PSAP motif motif lies at 42-45; that stretch reads PSAP.

This sequence belongs to the vesiculoviruses matrix protein family. Homomultimer. Interacts with viral nucleocapsid; this interaction contributes to the virion assembly. Interacts with the viral envelope glycoprotein; this interaction contributes to the virion assembly. Interacts with host RAE1-NUP98 complex. Interacts with host NEDD4 and TSG101. Interacts with host dynamin. Interacts with host NDUFAF4; the interaction inhibits viral propagation and is independent of interferon activation. Interacts with host GTF2H5; the interaction may inhibit host transcription. In terms of processing, phosphorylated by host.

The protein localises to the virion. The protein resides in the host endomembrane system. It localises to the host nucleus membrane. It is found in the host nucleus. Its subcellular location is the host cytoplasm. In terms of biological role, forms a double layer around the helical nucleocapsid, the inner matrix layer binding to the N helix and the outer matrix layer binding to the envelope glycoprotein. Plays a major role in assembly and budding of virion, by recruiting cellular partners of the ESCRT complexes that play a key role in releasing the budding particle from the host membrane. Condensates the ribonucleocapsid core during virus assembly. Inhibits the host mRNA nuclear export thereby inducing the shut off of cellular transcription and preventing the interferon signaling and the establishment of antiviral state in infected cells. This shutoff presumably inhibits interferon signaling and thus establishment of antiviral state in virus infected cells. Induces cell-rounding, cytoskeleton disorganization and apoptosis in infected cell. Inhibits host transcription, possibly through interaction with host DNA repair factor IIH/TFIIH GTF2H5 subunit. This chain is Matrix protein (M), found in Piry virus (PIRYV).